Consider the following 399-residue polypeptide: Serpin-Z1B (399 aa).

The interval 344-368 (GTEAAASTAIKMVPQQARPPSVMDF) is RCL.

Belongs to the serpin family.

In terms of biological role, inhibits chymotrypsin and cathepsin G in vitro. In Triticum aestivum (Wheat), this protein is Serpin-Z1B.